The following is a 151-amino-acid chain: 6,7-dimethyl-8-ribityllumazine synthase (151 aa).

5-amino-6-(D-ribitylamino)uracil-binding positions include Phe15, 49-51, and 73-75; these read AVE and AVI. Residue 78–79 coordinates (2S)-2-hydroxy-3-oxobutyl phosphate; the sequence is ET. His81 functions as the Proton donor in the catalytic mechanism. 5-amino-6-(D-ribitylamino)uracil is bound at residue Phe106. A (2S)-2-hydroxy-3-oxobutyl phosphate-binding site is contributed by Arg120.

This sequence belongs to the DMRL synthase family. Forms an icosahedral capsid composed of 60 subunits, arranged as a dodecamer of pentamers.

It carries out the reaction (2S)-2-hydroxy-3-oxobutyl phosphate + 5-amino-6-(D-ribitylamino)uracil = 6,7-dimethyl-8-(1-D-ribityl)lumazine + phosphate + 2 H2O + H(+). It functions in the pathway cofactor biosynthesis; riboflavin biosynthesis; riboflavin from 2-hydroxy-3-oxobutyl phosphate and 5-amino-6-(D-ribitylamino)uracil: step 1/2. Catalyzes the formation of 6,7-dimethyl-8-ribityllumazine by condensation of 5-amino-6-(D-ribitylamino)uracil with 3,4-dihydroxy-2-butanone 4-phosphate. This is the penultimate step in the biosynthesis of riboflavin. This is 6,7-dimethyl-8-ribityllumazine synthase from Coxiella burnetii (strain Dugway 5J108-111).